Reading from the N-terminus, the 355-residue chain is WAT1-related protein At1g25270 (355 aa).

10 consecutive transmembrane segments (helical) span residues 4-24, 33-53, 65-85, 94-114, 134-154, 175-195, 207-227, 244-264, 272-292, and 297-317; these read VVAM…FKIT, VLVA…ALIF, LLLL…ILYL, TFSA…GLVF, LLGA…IHIW, VSIL…LWLL, LYWN…IIAL, LLAT…LVAW, LFVT…GSFA, and LHLG…LVVW. In terms of domain architecture, EamA 1 spans 12–142; that stretch reads FIFAGMFILF…TLLGACGALV (131 aa). In terms of domain architecture, EamA 2 spans 210–316; that stretch reads NTSLMNGVGS…IMVGGVYLVV (107 aa).

This sequence belongs to the drug/metabolite transporter (DMT) superfamily. Plant drug/metabolite exporter (P-DME) (TC 2.A.7.4) family.

It is found in the membrane. In Arabidopsis thaliana (Mouse-ear cress), this protein is WAT1-related protein At1g25270.